The chain runs to 552 residues: Cytochrome c oxidase subunit 1 (552 aa).

A helical transmembrane segment spans residues 35-55; it reads VIGIQYLVTAFIFYLIGGLMA. His-82 lines the Fe(II)-heme a pocket. Transmembrane regions (helical) follow at residues 85 to 105, 120 to 140, 164 to 184, 211 to 231, 252 to 272, and 284 to 304; these read IMIF…YLVP, ALAF…FLFG, WILA…NFIV, LLAL…LFDI, LFWF…FGIM, and IFGY…GLFV. Residues His-258 and Tyr-262 each coordinate Cu cation. Positions 258–262 form a cross-link, 1'-histidyl-3'-tyrosine (His-Tyr); the sequence is HPAVY. Residues His-307 and His-308 each contribute to the Cu cation site. A run of 5 helical transmembrane segments spans residues 321–341, 355–375, 390–410, 426–446, and 470–490; these read FFTI…FSWV, MLFA…GVTL, VVAH…YAGI, LGIL…LPMH, and ICTI…INII. Residue His-393 coordinates heme a3. His-395 contacts Fe(II)-heme a.

This sequence belongs to the heme-copper respiratory oxidase family. It depends on Cu(2+) as a cofactor. Heme is required as a cofactor.

It localises to the cell membrane. It carries out the reaction 4 Fe(II)-[cytochrome c] + O2 + 8 H(+)(in) = 4 Fe(III)-[cytochrome c] + 2 H2O + 4 H(+)(out). The protein operates within energy metabolism; oxidative phosphorylation. Cytochrome c oxidase is the component of the respiratory chain that catalyzes the reduction of oxygen to water. Subunits 1-3 form the functional core of the enzyme complex. CO I is the catalytic subunit of the enzyme. Electrons originating in cytochrome c are transferred via the copper A center of subunit 2 and heme A of subunit 1 to the bimetallic center formed by heme A3 and copper B. This is Cytochrome c oxidase subunit 1 (ctaD) from Thermostichus vulcanus (Synechococcus vulcanus).